Here is a 177-residue protein sequence, read N- to C-terminus: Photosystem I assembly protein Ycf4 (177 aa).

2 helical membrane passes run 20 to 40 (VALL…SSYF) and 60 to 80 (LVMG…WAVI).

The protein belongs to the Ycf4 family.

Its subcellular location is the cellular thylakoid membrane. Its function is as follows. Seems to be required for the assembly of the photosystem I complex. The polypeptide is Photosystem I assembly protein Ycf4 (Synechococcus sp. (strain RCC307)).